An 88-amino-acid chain; its full sequence is Small ribosomal subunit protein bS20 (88 aa).

Belongs to the bacterial ribosomal protein bS20 family.

Binds directly to 16S ribosomal RNA. The sequence is that of Small ribosomal subunit protein bS20 from Bradyrhizobium sp. (strain BTAi1 / ATCC BAA-1182).